The chain runs to 121 residues: Small ribosomal subunit protein uS13 (121 aa).

Residues 91-121 form a disordered region; sequence HRMSLPVRGQRTRTNARTRRGSRKTVAGRKK. The segment covering 100–121 has biased composition (basic residues); it reads QRTRTNARTRRGSRKTVAGRKK.

This sequence belongs to the universal ribosomal protein uS13 family. In terms of assembly, part of the 30S ribosomal subunit. Forms a loose heterodimer with protein S19. Forms two bridges to the 50S subunit in the 70S ribosome.

Functionally, located at the top of the head of the 30S subunit, it contacts several helices of the 16S rRNA. In the 70S ribosome it contacts the 23S rRNA (bridge B1a) and protein L5 of the 50S subunit (bridge B1b), connecting the 2 subunits; these bridges are implicated in subunit movement. Contacts the tRNAs in the A and P-sites. This Prochlorococcus marinus (strain SARG / CCMP1375 / SS120) protein is Small ribosomal subunit protein uS13.